The chain runs to 468 residues: POC1 centriolar protein homolog B (468 aa).

7 WD repeats span residues 16–55, 58–97, 100–139, 142–181, 184–223, 226–265, and 268–307; these read GHKD…RAYK, GHKE…ESTV, AHTA…FLFS, QHTN…CINT, DYKG…LLQH, VHNA…LIYT, and GHQG…YSVK. Residues 420-459 are a coiled coil; that stretch reads NTLEQIVDQLNVLTQTVSILEHRLTLTEDKLKECLENQQK.

Belongs to the WD repeat POC1 family. As to quaternary structure, interacts with pat. In terms of tissue distribution, highly expressed in ovary and, at low levels, in testis.

Its subcellular location is the cytoplasm. It localises to the cytoskeleton. It is found in the microtubule organizing center. The protein localises to the centrosome. The protein resides in the centriole. Functionally, plays an important role in centriole assembly and/or stability and ciliogenesis. Involved in early steps of centriole duplication, as well as in the later steps of centriole length control. This is POC1 centriolar protein homolog B (poc1b) from Xenopus laevis (African clawed frog).